The sequence spans 324 residues: Pepsin-2B (324 aa).

The 308-residue stretch at Y14–A321 folds into the Peptidase A1 domain. D32 is a catalytic residue. C45 and C50 are oxidised to a cystine. Residues Q86 to G109 are disordered. Residues D96–E107 are compositionally biased toward polar residues. Cysteines 206 and 209 form a disulfide. Residue D214 is part of the active site. A disulfide bridge links C247 with C280.

It belongs to the peptidase A1 family.

This is Pepsin-2B from Gadus morhua (Atlantic cod).